Here is a 952-residue protein sequence, read N- to C-terminus: Valine--tRNA ligase (952 aa).

The short motif at 42–52 is the 'HIGH' region element; sequence PNVTGSLHMGH. The 'KMSKS' region motif lies at 554–558; that stretch reads KMSKS. Residue lysine 557 coordinates ATP. The stretch at 888–952 forms a coiled coil; the sequence is AELARLDGEI…EEQKKTIAAL (65 aa).

This sequence belongs to the class-I aminoacyl-tRNA synthetase family. ValS type 1 subfamily. As to quaternary structure, monomer.

The protein resides in the cytoplasm. It catalyses the reaction tRNA(Val) + L-valine + ATP = L-valyl-tRNA(Val) + AMP + diphosphate. In terms of biological role, catalyzes the attachment of valine to tRNA(Val). As ValRS can inadvertently accommodate and process structurally similar amino acids such as threonine, to avoid such errors, it has a 'posttransfer' editing activity that hydrolyzes mischarged Thr-tRNA(Val) in a tRNA-dependent manner. The polypeptide is Valine--tRNA ligase (Vibrio parahaemolyticus serotype O3:K6 (strain RIMD 2210633)).